Reading from the N-terminus, the 64-residue chain is MSKLGVLLTICLLLFPLTALPLDGDQPADQAAERMQAEQHPLFDQKRRCCKFPCPDSCRYLCCG.

An N-terminal signal peptide occupies residues 1–19 (MSKLGVLLTICLLLFPLTA). Residues 20-47 (LPLDGDQPADQAAERMQAEQHPLFDQKR) constitute a propeptide that is removed on maturation. 3 disulfide bridges follow: Cys49–Cys58, Cys50–Cys62, and Cys54–Cys63. At Cys63 the chain carries Cysteine amide.

It belongs to the conotoxin M superfamily. Post-translationally, contains 3 disulfide bonds. In terms of processing, two peptides are produced from this precursor. Conotoxin Tx3.5-b is amidated at Cys-63, conotoxin Tx3.5-a has an unmodified C-terminus. Expressed by the venom duct. Is present in all duct parts with a highest content in part 2 (proximal of the venom bulb) and then decreases in concentration toward the end of the duct.

The protein localises to the secreted. This chain is Conotoxin Tx3.5-a, found in Conus textile (Cloth-of-gold cone).